The following is a 213-amino-acid chain: Heterochromatin protein 1 (213 aa).

Disordered stretches follow at residues 1–24 (MGKK…EEEY) and 74–151 (RKDE…TGFD). A Chromo 1 domain is found at 24 to 82 (YAVEKILDRRVRKGKVEYYLKWKGYAETENTWEPEGNLDCQDLIQQYELSRKDEANAAA). Residues 89–104 (SKKERPGSSTKVKETG) show a composition bias toward basic and acidic residues. Positions 105–115 (RTSTTASNSSG) are enriched in polar residues. The region spanning 154–212 (LEAEKILGASDNNGRLTFLIQFKGVDQAEMVPSTVANVKIPQMVIRFYEERLSWYSDNE) is the Chromo 2 domain.

The protein resides in the nucleus. Structural component of heterochromatin, involved in gene repression and the modification of position-effect-variegation. Recognizes and binds histone H3 tails methylated at 'Lys-9', leading to epigenetic repression. This is Heterochromatin protein 1 (HP1A) from Drosophila virilis (Fruit fly).